We begin with the raw amino-acid sequence, 131 residues long: Profilin (131 aa).

It belongs to the profilin family. In terms of assembly, occurs in many kinds of cells as a complex with monomeric actin in a 1:1 ratio.

Its subcellular location is the cytoplasm. It is found in the cytoskeleton. Binds to actin and affects the structure of the cytoskeleton. At high concentrations, profilin prevents the polymerization of actin, whereas it enhances it at low concentrations. By binding to PIP2, it inhibits the formation of IP3 and DG. This is Profilin from Arachis hypogaea (Peanut).